The sequence spans 359 residues: Protein-glutamate methylesterase/protein-glutamine glutaminase 1 (359 aa).

The Response regulatory domain occupies serine 4–glutamate 121. At aspartate 55 the chain carries 4-aspartylphosphate. In terms of domain architecture, CheB-type methylesterase spans tyrosine 169–leucine 354. Residues serine 181, histidine 207, and aspartate 303 contribute to the active site.

This sequence belongs to the CheB family. Post-translationally, phosphorylated by CheA. Phosphorylation of the N-terminal regulatory domain activates the methylesterase activity.

Its subcellular location is the cytoplasm. It carries out the reaction [protein]-L-glutamate 5-O-methyl ester + H2O = L-glutamyl-[protein] + methanol + H(+). It catalyses the reaction L-glutaminyl-[protein] + H2O = L-glutamyl-[protein] + NH4(+). Its function is as follows. Involved in chemotaxis. Part of a chemotaxis signal transduction system that modulates chemotaxis in response to various stimuli. Catalyzes the demethylation of specific methylglutamate residues introduced into the chemoreceptors (methyl-accepting chemotaxis proteins or MCP) by CheR. Also mediates the irreversible deamidation of specific glutamine residues to glutamic acid. The protein is Protein-glutamate methylesterase/protein-glutamine glutaminase 1 of Chromobacterium violaceum (strain ATCC 12472 / DSM 30191 / JCM 1249 / CCUG 213 / NBRC 12614 / NCIMB 9131 / NCTC 9757 / MK).